A 459-amino-acid chain; its full sequence is Exodeoxyribonuclease 7 large subunit (459 aa).

It belongs to the XseA family. As to quaternary structure, heterooligomer composed of large and small subunits.

The protein localises to the cytoplasm. The catalysed reaction is Exonucleolytic cleavage in either 5'- to 3'- or 3'- to 5'-direction to yield nucleoside 5'-phosphates.. Its function is as follows. Bidirectionally degrades single-stranded DNA into large acid-insoluble oligonucleotides, which are then degraded further into small acid-soluble oligonucleotides. The sequence is that of Exodeoxyribonuclease 7 large subunit from Pseudomonas fluorescens (strain Pf0-1).